The following is a 513-amino-acid chain: DNA damage-binding protein CMR1 (513 aa).

Over residues 35–45 (RSEAGIEDHRK) the composition is skewed to basic and acidic residues. Residues 35–103 (RSEAGIEDHR…TAQNVKQEEE (69 aa)) are disordered. WD repeat units lie at residues 183–224 (IVHE…PDPE), 237–277 (LFSR…SDEL), 329–369 (LSDK…AKPD), 386–425 (NSRLSVSAVSYAPIDHTLVCNGYDNTVRLFNARADLPSEL), 438–477 (GRWVSVLKARFKLNMDVFAIANMKRAIDIYTSRGEQLSHL), and 478–513 (ETSTVPAVVSWHPMQNWIVGGNNSGKVFLFTDAPQE).

It belongs to the WD repeat DDB2/WDR76 family.

In terms of biological role, DNA-binding protein that binds to both single- and double-stranded DNA. Binds preferentially to UV-damaged DNA. May be involved in DNA-metabolic processes. The sequence is that of DNA damage-binding protein CMR1 from Eremothecium gossypii (strain ATCC 10895 / CBS 109.51 / FGSC 9923 / NRRL Y-1056) (Yeast).